A 145-amino-acid polypeptide reads, in one-letter code: Large ribosomal subunit protein uL14m (145 aa).

The N-terminal 30 residues, 1 to 30 (MAALTGLWGSFAHVSRAFSQRCFSTSGSLS), are a transit peptide targeting the mitochondrion.

Belongs to the universal ribosomal protein uL14 family. As to quaternary structure, component of the mitochondrial ribosome large subunit (39S) which comprises a 16S rRNA and about 50 distinct proteins. Interacts with MALSU1.

The protein localises to the mitochondrion. Its function is as follows. May form part of 2 intersubunit bridges in the assembled ribosome. Upon binding to MALSU1, intersubunit bridge formation is blocked, preventing ribosome formation and repressing translation. The chain is Large ribosomal subunit protein uL14m (Mrpl14) from Mus musculus (Mouse).